Here is a 349-residue protein sequence, read N- to C-terminus: MTSSADSGRDAAWLDDFLALTLAGDAPPAEAGECAARAVRWRWLGDGLLRLEPADAAQRMQSVLVSAGVHGDETAPIELLSTLVRDIARGALPLRCRLLVALGNPGAMRAGERYLDDDLNRLFGGRHAQLAASREAPRAAQLEAAAALFFSTAGRARGARWHIDMHTAIRASVFEQFALLPHTGEPPTRTMFEWLGEAQIAAVLLHTTKGSTFSHFTAQACGALACTLELGKVMPFGANDLSRFAPADAAVRRLVSGRRDAPRGALPRAFTVVDQITKQSDALELFVANDVPNFTPFARGTLLARDGDYRYAVRHEQERIVFPNPSVKPGLRAGLLVIETTRDTHAALA.

Positions 70, 73, and 166 each coordinate Zn(2+). Glu229 is an active-site residue.

Belongs to the AspA/AstE family. Succinylglutamate desuccinylase subfamily. It depends on Zn(2+) as a cofactor.

It catalyses the reaction N-succinyl-L-glutamate + H2O = L-glutamate + succinate. It participates in amino-acid degradation; L-arginine degradation via AST pathway; L-glutamate and succinate from L-arginine: step 5/5. Its function is as follows. Transforms N(2)-succinylglutamate into succinate and glutamate. The chain is Succinylglutamate desuccinylase from Burkholderia pseudomallei (strain 1710b).